Here is a 256-residue protein sequence, read N- to C-terminus: Probable transcriptional regulatory protein cce_0894 (256 aa).

The protein belongs to the TACO1 family.

It is found in the cytoplasm. This Crocosphaera subtropica (strain ATCC 51142 / BH68) (Cyanothece sp. (strain ATCC 51142)) protein is Probable transcriptional regulatory protein cce_0894.